We begin with the raw amino-acid sequence, 388 residues long: UDP-N-acetylglucosamine--N-acetylmuramyl-(pentapeptide) pyrophosphoryl-undecaprenol N-acetylglucosamine transferase (388 aa).

UDP-N-acetyl-alpha-D-glucosamine contacts are provided by residues 15-17, N125, R168, S196, and Q297; that span reads TGG.

It belongs to the glycosyltransferase 28 family. MurG subfamily.

It is found in the cell inner membrane. It carries out the reaction di-trans,octa-cis-undecaprenyl diphospho-N-acetyl-alpha-D-muramoyl-L-alanyl-D-glutamyl-meso-2,6-diaminopimeloyl-D-alanyl-D-alanine + UDP-N-acetyl-alpha-D-glucosamine = di-trans,octa-cis-undecaprenyl diphospho-[N-acetyl-alpha-D-glucosaminyl-(1-&gt;4)]-N-acetyl-alpha-D-muramoyl-L-alanyl-D-glutamyl-meso-2,6-diaminopimeloyl-D-alanyl-D-alanine + UDP + H(+). The protein operates within cell wall biogenesis; peptidoglycan biosynthesis. In terms of biological role, cell wall formation. Catalyzes the transfer of a GlcNAc subunit on undecaprenyl-pyrophosphoryl-MurNAc-pentapeptide (lipid intermediate I) to form undecaprenyl-pyrophosphoryl-MurNAc-(pentapeptide)GlcNAc (lipid intermediate II). The polypeptide is UDP-N-acetylglucosamine--N-acetylmuramyl-(pentapeptide) pyrophosphoryl-undecaprenol N-acetylglucosamine transferase (Novosphingobium aromaticivorans (strain ATCC 700278 / DSM 12444 / CCUG 56034 / CIP 105152 / NBRC 16084 / F199)).